Consider the following 501-residue polypeptide: Circadian clock oscillator protein KaiC (501 aa).

2 KaiC domains span residues 1-232 (MQVQ…ITVF) and 246-501 (IRIS…REKK). Residues Gly-34, Thr-35, Gly-36, Lys-37, Thr-38, Ser-74, Lys-209, Leu-210, Arg-211, Thr-213, His-215, Thr-275, Gly-276, Thr-277, Gly-278, Lys-279, and Thr-280 each coordinate ATP. Residue Thr-38 coordinates Mg(2+). Mg(2+) is bound by residues Thr-280 and Glu-303. Trp-316 contacts ATP. Ser-416 is modified (phosphoserine; by autocatalysis). Thr-417 bears the Phosphothreonine; by autocatalysis mark. The ATP site is built by Arg-436, Lys-442, Met-443, Arg-444, Ser-446, His-448, and Lys-450.

The protein belongs to the KaiC family. As to quaternary structure, homohexamer; hexamerization is dependent on ATP-binding. Component of the KaiBC complex. KaiC interacts with SasA, activating its autokinase function and leading to RpaA activation. It depends on Mg(2+) as a cofactor. Phosphorylated on serine and threonine residues by autocatalysis. Has a 4 step phosphorylation cycle; the autokinase acts first on Thr-417, then Ser-416. When Ser-416 is modified KaiC switches to an autophosphatase mode, acting first on phospho-Thr-417 then phospho-Ser-416.

It carries out the reaction L-seryl-[protein] + ATP = O-phospho-L-seryl-[protein] + ADP + H(+). It catalyses the reaction L-threonyl-[protein] + ATP = O-phospho-L-threonyl-[protein] + ADP + H(+). The enzyme catalyses ATP + H2O = ADP + phosphate + H(+). In terms of biological role, central component of the KaiBC oscillator complex, which constitutes the main circadian regulator in cyanobacteria. Its composition changes during the circadian cycle to control KaiC phosphorylation. Autophosphorylates and has a weak ATPase activity; ATPase activity defines the circadian period. In Prochlorococcus marinus (strain SARG / CCMP1375 / SS120), this protein is Circadian clock oscillator protein KaiC.